We begin with the raw amino-acid sequence, 180 residues long: Protein GrpE (180 aa).

Positions 1–25 are disordered; that stretch reads MSKKKAEDKQPIIKDEAVEEPKSDS.

This sequence belongs to the GrpE family. As to quaternary structure, homodimer.

It localises to the cytoplasm. In terms of biological role, participates actively in the response to hyperosmotic and heat shock by preventing the aggregation of stress-denatured proteins, in association with DnaK and GrpE. It is the nucleotide exchange factor for DnaK and may function as a thermosensor. Unfolded proteins bind initially to DnaJ; upon interaction with the DnaJ-bound protein, DnaK hydrolyzes its bound ATP, resulting in the formation of a stable complex. GrpE releases ADP from DnaK; ATP binding to DnaK triggers the release of the substrate protein, thus completing the reaction cycle. Several rounds of ATP-dependent interactions between DnaJ, DnaK and GrpE are required for fully efficient folding. This Fructilactobacillus sanfranciscensis (Lactobacillus sanfranciscensis) protein is Protein GrpE.